Here is a 453-residue protein sequence, read N- to C-terminus: Ribulose bisphosphate carboxylase large chain (453 aa).

A propeptide spanning residues Met-1–Ser-2 is cleaved from the precursor. Pro-3 carries the N-acetylproline modification. N6,N6,N6-trimethyllysine is present on Lys-14. The substrate site is built by Asn-123 and Thr-173. Catalysis depends on Lys-175, which acts as the Proton acceptor. Lys-177 contributes to the substrate binding site. Residues Lys-201, Asp-203, and Glu-204 each contribute to the Mg(2+) site. Position 201 is an N6-carboxylysine (Lys-201). His-294 (proton acceptor) is an active-site residue. Residues Arg-295, His-327, and Ser-379 each coordinate substrate.

This sequence belongs to the RuBisCO large chain family. Type I subfamily. As to quaternary structure, heterohexadecamer of 8 large chains and 8 small chains; disulfide-linked. The disulfide link is formed within the large subunit homodimers. Mg(2+) is required as a cofactor. The disulfide bond which can form in the large chain dimeric partners within the hexadecamer appears to be associated with oxidative stress and protein turnover.

It is found in the plastid. It localises to the chloroplast. It carries out the reaction 2 (2R)-3-phosphoglycerate + 2 H(+) = D-ribulose 1,5-bisphosphate + CO2 + H2O. The enzyme catalyses D-ribulose 1,5-bisphosphate + O2 = 2-phosphoglycolate + (2R)-3-phosphoglycerate + 2 H(+). In terms of biological role, ruBisCO catalyzes two reactions: the carboxylation of D-ribulose 1,5-bisphosphate, the primary event in carbon dioxide fixation, as well as the oxidative fragmentation of the pentose substrate in the photorespiration process. Both reactions occur simultaneously and in competition at the same active site. The chain is Ribulose bisphosphate carboxylase large chain from Phuopsis stylosa (Caucasian crosswort).